The chain runs to 307 residues: Estrogen receptor (307 aa).

Residues Gly-1–Lys-43 constitute a DNA-binding region (nuclear receptor). The segment at Cys-7–Cys-31 adopts an NR C4-type zinc-finger fold. The interval Asp-44–Leu-95 is hinge. The region spanning Thr-96–Met-307 is the NR LBD domain.

This sequence belongs to the nuclear hormone receptor family. NR3 subfamily. Binds DNA as a homodimer. Can form a heterodimer with ER-beta.

The protein resides in the nucleus. The steroid hormones and their receptors are involved in the regulation of eukaryotic gene expression and affect cellular proliferation and differentiation in target tissues. The protein is Estrogen receptor (ESR1) of Aspidoscelis uniparens (Desert grassland whiptail lizard).